We begin with the raw amino-acid sequence, 807 residues long: Nucleolar complex protein 3 homolog (807 aa).

Disordered regions lie at residues 27–93 (KLKN…DMMD) and 167–191 (EKPV…EVIE). Residues 40–51 (KKYRKEQRKLRQ) show a composition bias toward basic residues. Basic and acidic residues predominate over residues 52–78 (AVKDAVSKKPIPLEDPKSKRPVKRMER). Composition is skewed to acidic residues over residues 79–93 (EEDE…DMMD) and 174–190 (QQEE…EEVI). A Glycyl lysine isopeptide (Lys-Gly) (interchain with G-Cter in SUMO2) cross-link involves residue lysine 332. Residues 449–489 (FKEKRKTLSRMQRKWKKAEEKLERELREAEASESTEKKLKL) are a coiled coil.

Belongs to the CBF/MAK21 family.

It localises to the nucleus. It is found in the nucleolus. The protein localises to the nucleus speckle. May be required for adipogenesis. The protein is Nucleolar complex protein 3 homolog (Noc3l) of Mus musculus (Mouse).